We begin with the raw amino-acid sequence, 251 residues long: 3-deoxy-manno-octulosonate cytidylyltransferase (251 aa).

The protein belongs to the KdsB family.

It localises to the cytoplasm. The enzyme catalyses 3-deoxy-alpha-D-manno-oct-2-ulosonate + CTP = CMP-3-deoxy-beta-D-manno-octulosonate + diphosphate. The protein operates within nucleotide-sugar biosynthesis; CMP-3-deoxy-D-manno-octulosonate biosynthesis; CMP-3-deoxy-D-manno-octulosonate from 3-deoxy-D-manno-octulosonate and CTP: step 1/1. Its pathway is bacterial outer membrane biogenesis; lipopolysaccharide biosynthesis. In terms of biological role, activates KDO (a required 8-carbon sugar) for incorporation into bacterial lipopolysaccharide in Gram-negative bacteria. This Geotalea uraniireducens (strain Rf4) (Geobacter uraniireducens) protein is 3-deoxy-manno-octulosonate cytidylyltransferase.